Here is a 421-residue protein sequence, read N- to C-terminus: Heterogeneous nuclear ribonucleoprotein 27C (421 aa).

2 RRM domains span residues 7–88 (GKLF…RTLQ) and 96–173 (YKVF…KAEP). 2 disordered regions span residues 171 to 191 (AEPR…GGAY) and 240 to 373 (GTSP…SEYD). Ser177 carries the phosphoserine modification. Residues 240 to 250 (GTSPQQQQYGY) are compositionally biased toward polar residues. Over residues 264–273 (PPGPQGPPPQ) the composition is skewed to pro residues. The segment covering 275–284 (SNYAGPQQTQ) has biased composition (polar residues). Low complexity predominate over residues 293-302 (NSTSTGAPSG). Ser366, Ser368, and Ser370 each carry phosphoserine. A Phosphotyrosine modification is found at Tyr372. A Phosphoserine modification is found at Ser379. A disordered region spans residues 392-421 (EGASNYGAGPRSAYGNDSSTQPPYATSQAV). Positions 406–421 (GNDSSTQPPYATSQAV) are enriched in polar residues.

As to quaternary structure, interacts with sqd; the interaction is RNA-dependent and may be specific for sqd isoform A/sqdA. Interacts with otu; the interaction is RNA-independent.

The protein resides in the nucleus. Its subcellular location is the cytoplasm. Functionally, this protein is a component of ribonucleosomes. Could be needed to organize a concentration gradient of a dorsalizing morphogen (Dm) originating in the germinal vesicle. Interacts with grk mRNA (via 3' UTR) and involved in its localization to the dorsal anterior region of the oocyte during dorsal-ventral axis determination; may function as a ribonuclear protein complex together with sqd and otu. Required for polytene chromosome dispersal in nurse cells during oogenesis. May be involved in the regulation of splicing. The sequence is that of Heterogeneous nuclear ribonucleoprotein 27C from Drosophila melanogaster (Fruit fly).